The chain runs to 297 residues: Protein-L-isoaspartate O-methyltransferase (297 aa).

A disordered region spans residues 20 to 57; that stretch reads RKPAPARTAGMPAVGAPGPAQAQAKARDKQPSAPTAAA. Residues 28-43 are compositionally biased toward low complexity; that stretch reads AGMPAVGAPGPAQAQA. Ser133 is a catalytic residue.

The protein belongs to the methyltransferase superfamily. L-isoaspartyl/D-aspartyl protein methyltransferase family.

It is found in the cytoplasm. The enzyme catalyses [protein]-L-isoaspartate + S-adenosyl-L-methionine = [protein]-L-isoaspartate alpha-methyl ester + S-adenosyl-L-homocysteine. Functionally, catalyzes the methyl esterification of L-isoaspartyl residues in peptides and proteins that result from spontaneous decomposition of normal L-aspartyl and L-asparaginyl residues. It plays a role in the repair and/or degradation of damaged proteins. The protein is Protein-L-isoaspartate O-methyltransferase of Cupriavidus pinatubonensis (strain JMP 134 / LMG 1197) (Cupriavidus necator (strain JMP 134)).